Consider the following 215-residue polypeptide: Ras-related protein Rab-5B (215 aa).

The GTP site is built by serine 29, alanine 30, glycine 32, lysine 33, serine 34, serine 35, histidine 46, glutamate 47, threonine 52, glycine 78, asparagine 133, lysine 134, aspartate 136, alanine 164, and lysine 165. Serine 34 is a binding site for Mg(2+). 2 consecutive short sequence motifs (switch) follow at residues 44-56 (QFHE…IGAA) and 77-93 (AGQE…YRGA). Residue threonine 52 participates in Mg(2+) binding. A disordered region spans residues 184-215 (SEPQSTSGAAGRSRGVDLHEQTQQNKSQCCSN). Over residues 204–215 (QTQQNKSQCCSN) the composition is skewed to polar residues. S-geranylgeranyl cysteine attachment occurs at residues cysteine 212 and cysteine 213.

It belongs to the small GTPase superfamily. Rab family. Mg(2+) is required as a cofactor.

Its subcellular location is the cell membrane. It localises to the early endosome membrane. The enzyme catalyses GTP + H2O = GDP + phosphate + H(+). Its activity is regulated as follows. Regulated by guanine nucleotide exchange factors (GEFs) which promote the exchange of bound GDP for free GTP. Regulated by GTPase activating proteins (GAPs) which increase the GTP hydrolysis activity. Inhibited by GDP dissociation inhibitors (GDIs). In terms of biological role, the small GTPases Rab are key regulators of intracellular membrane trafficking, from the formation of transport vesicles to their fusion with membranes. Rabs cycle between an inactive GDP-bound form and an active GTP-bound form that is able to recruit to membranes different sets of downstream effectors directly responsible for vesicle formation, movement, tethering and fusion. In Gallus gallus (Chicken), this protein is Ras-related protein Rab-5B (RAB5B).